The primary structure comprises 493 residues: Proline--tRNA ligase (493 aa).

It belongs to the class-II aminoacyl-tRNA synthetase family. ProS type 3 subfamily. In terms of assembly, homodimer.

The protein localises to the cytoplasm. The enzyme catalyses tRNA(Pro) + L-proline + ATP = L-prolyl-tRNA(Pro) + AMP + diphosphate. Functionally, catalyzes the attachment of proline to tRNA(Pro) in a two-step reaction: proline is first activated by ATP to form Pro-AMP and then transferred to the acceptor end of tRNA(Pro). In Porphyromonas gingivalis (strain ATCC BAA-308 / W83), this protein is Proline--tRNA ligase.